The sequence spans 126 residues: Acidic phospholipase A2 3 (126 aa).

A propeptide spanning residues 1-7 (SNRPMPL) is cleaved from the precursor. Disulfide bonds link C18–C78, C33–C125, C35–C51, C50–C106, C57–C99, C67–C92, and C85–C97. Residues Y34, G36, and G38 each contribute to the Ca(2+) site. H54 is a catalytic residue. Ca(2+) is bound at residue D55. D100 is a catalytic residue.

Belongs to the phospholipase A2 family. Group I subfamily. D49 sub-subfamily. The cofactor is Ca(2+). In terms of tissue distribution, expressed by the venom gland.

The protein localises to the secreted. The catalysed reaction is a 1,2-diacyl-sn-glycero-3-phosphocholine + H2O = a 1-acyl-sn-glycero-3-phosphocholine + a fatty acid + H(+). Its function is as follows. PLA2 catalyzes the calcium-dependent hydrolysis of the 2-acyl groups in 3-sn-phosphoglycerides. The chain is Acidic phospholipase A2 3 from Naja sagittifera (Andaman cobra).